Reading from the N-terminus, the 431-residue chain is 3-phosphoshikimate 1-carboxyvinyltransferase (431 aa).

Residues Lys26, Ser27, and Arg31 each contribute to the 3-phosphoshikimate site. Position 26 (Lys26) interacts with phosphoenolpyruvate. The phosphoenolpyruvate site is built by Gly99 and Arg127. Residues Ser170, Ser171, Gln172, Ser199, Glu314, and His343 each coordinate 3-phosphoshikimate. Gln172 is a phosphoenolpyruvate binding site. The active-site Proton acceptor is Glu314. Phosphoenolpyruvate-binding residues include Arg347, Arg388, and Lys413.

Belongs to the EPSP synthase family. Monomer.

The protein localises to the cytoplasm. The catalysed reaction is 3-phosphoshikimate + phosphoenolpyruvate = 5-O-(1-carboxyvinyl)-3-phosphoshikimate + phosphate. It participates in metabolic intermediate biosynthesis; chorismate biosynthesis; chorismate from D-erythrose 4-phosphate and phosphoenolpyruvate: step 6/7. Catalyzes the transfer of the enolpyruvyl moiety of phosphoenolpyruvate (PEP) to the 5-hydroxyl of shikimate-3-phosphate (S3P) to produce enolpyruvyl shikimate-3-phosphate and inorganic phosphate. This Mycobacterium ulcerans (strain Agy99) protein is 3-phosphoshikimate 1-carboxyvinyltransferase.